Reading from the N-terminus, the 201-residue chain is 3-isopropylmalate dehydratase small subunit (201 aa).

Belongs to the LeuD family. LeuD type 1 subfamily. Heterodimer of LeuC and LeuD.

It catalyses the reaction (2R,3S)-3-isopropylmalate = (2S)-2-isopropylmalate. The protein operates within amino-acid biosynthesis; L-leucine biosynthesis; L-leucine from 3-methyl-2-oxobutanoate: step 2/4. Functionally, catalyzes the isomerization between 2-isopropylmalate and 3-isopropylmalate, via the formation of 2-isopropylmaleate. This Rhodopseudomonas palustris (strain BisA53) protein is 3-isopropylmalate dehydratase small subunit.